The following is a 4836-amino-acid chain: E3 ubiquitin-protein ligase HERC2 (4836 aa).

The tract at residues 58–90 (LPLRKDDGVDAQSGTKKEDLNDKEKKEEEETPA) is disordered. Residues 72–85 (TKKEDLNDKEKKEE) are compositionally biased toward basic and acidic residues. Threonine 273 carries the post-translational modification Phosphothreonine. One copy of the RCC1 1-1 repeat lies at 416 to 462 (PTSHKGSLQEVIGWGLIGWKYYANVIGPIQCEGLASLGVMQVACAEK). An RCC1 1-2 repeat occupies 463-513 (RFLILSRNGRVYTQAYNSDMLAPQLVQGLASRNIVKIAAHSDGHHYLALAA). The stretch at 514–569 (TGEVYSWGCGDGGRLGHGDTVPLEEPKVISAFSGKQAGKHVVHIACGSTYSAAITA) is one RCC1 1-3 repeat. The RCC1 1-4 repeat unit spans residues 570–621 (EGELYTWGRGNYGRLGHGSSEDEAIPMLVAGLKGLKVIDVACGSGDAQTLAV). The RCC1 1-5 repeat unit spans residues 624 to 675 (NGQVWSWGDGDYGKLGRGGSDGCKTPKLIEKLQDLDVIKVRCGSQFSIALTK). Residue threonine 648 is modified to Phosphothreonine. The RCC1 1-6 repeat unit spans residues 676–727 (DGQVYSWGKGDNQRLGHGTEEHVRYPKLLEGLQGKKVIDVAAGSTHCLALTE). An RCC1 1-7 repeat occupies 729–779 (SEVHSWGSNDQCQHFDTLRVTKPEPTALPGLDSKHIVGIACGPAQSFAWSS). Residues 948–981 (ALNAAITAEIQDIEAKKEAQKEKEIDEQEASAST) adopt a coiled-coil conformation. Residues 1208-1284 (VTLIRKADLE…MHAFCVGQYL (77 aa)) form the Cytochrome b5 heme-binding domain. Serine 1578 carries the phosphoserine modification. One can recognise an MIB/HERC2 domain in the interval 1860-1933 (SGPELAAMMK…KYDLKLVELP (74 aa)). Phosphoserine is present on serine 1943. Threonine 1945 carries the phosphothreonine modification. Residues 2351–2376 (GTGTLQTDDGAAASPDLGDMSPEGPQ) form a disordered region. At serine 2455 the chain carries Phosphoserine. The 77-residue stretch at 2555–2631 (RADFLSNDDY…RYIHVELIGY (77 aa)) folds into the CPH domain. Residues 2704 to 2756 (HPGVTCDGCQTFPINGSRFKCRNCDDFDFCETCFKTKKHNTRHTFGRINEPGQ) form a ZZ-type zinc finger. Cysteine 2709, cysteine 2712, cysteine 2724, cysteine 2727, cysteine 2733, cysteine 2736, histidine 2742, and histidine 2746 together coordinate Zn(2+). In terms of domain architecture, DOC spans 2760–2937 (FCGRSGKQLK…ASDNEEEEDD (178 aa)). The tract at residues 2928–2947 (ASDNEEEEDDKGSTGSLIRK) is disordered. Serine 2929 is modified (phosphoserine). One copy of the RCC1 2-1 repeat lies at 2959–3010 (RTKVFVWGLNDKDQLGGLKGSKIKVPSFSETLSALNVVQVAGGSKSLFAVTV). The RCC1 2-2 repeat unit spans residues 3011–3065 (EGKVYSCGEATNGRLGLGMSSGTVPIPRQITALSSYVVKKVAVHSGGRHATALTV). Residues 3066-3117 (DGKVFSWGEGDDGKLGHFSRMNCDKPRLIEALKTKRIRDIACGSSHSAALTS) form an RCC1 2-3 repeat. Residues 3119–3169 (GELYTWGLGEYGRLGHGDNTTQLKPKMVKVLLGHRVIQVACGSRDAQTLAL) form an RCC1 2-4 repeat. One copy of the RCC1 2-5 repeat lies at 3172–3223 (EGLVFSWGDGDFGKLGRGGSEGCNIPQNIERLNGQGVCQIECGAQFSLALTK). The stretch at 3225-3275 (GVVWTWGKGDYFRLGHGSDVHVRKPQVVEGLRGKKIVHVAVGALHCLAVTD) is one RCC1 2-6 repeat. One copy of the RCC1 2-7 repeat lies at 3276-3327 (SGQVYAWGDNDHGQQGNGTTTVNRKPTLVQGLEGQKITRVACGSSHSVAWTT). Disordered regions lie at residues 3479–3499 (DAVT…RPFI), 3517–3537 (KTKE…QSLD), and 3604–3632 (SQSG…SGTV). Over residues 3480–3495 (AVTPSAVTPSAPSASS) the composition is skewed to low complexity. Composition is skewed to polar residues over residues 3604–3613 (SQSGRLSSQP) and 3620–3631 (HPYTDDTSTSGT). The RCC1 3-1 repeat unit spans residues 3953–4004 (SGTIYGWGHNHRGQLGGIEGAKVKVPTPCEALATLRPVQLIGGEQTLFAVTA). One copy of the RCC1 3-2 repeat lies at 4006–4058 (GKLYATGYGAGGRLGIGGTESVSTPTLLESIQHVFIKKVAVNSGGKHCLALSS). Residues 4060-4110 (GEVYSWGEAEDGKLGHGNRSPCDRPRVIESLRGIEVVDVAAGGAHSACVTA) form an RCC1 3-3 repeat. The RCC1 3-4 repeat unit spans residues 4112–4164 (GDLYTWGKGRYGRLGHSDSEDQLKPKLVEALQGHRVIDIACGSGDAQTLCLTD). The RCC1 3-5 repeat unit spans residues 4166–4216 (DTVWSWGDGDYGKLGRGGSDGCKVPMKIDSLTGLGVVKVECGSQFSVALTK). Residues 4218–4268 (GAVYTWGKGDYHRLGHGSDDHVRRPRQVQGLQGKKVIAIATGSLHCVCCTE) form an RCC1 3-6 repeat. One copy of the RCC1 3-7 repeat lies at 4270-4320 (GEVYTWGDNDEGQLGDGTTNAIQRPRLVAALQGKKVNRVACGSAHTLAWST). One can recognise an HECT domain in the interval 4459-4796 (DSLLLPHRVW…IHFCKSIDTD (338 aa)). The active-site Glycyl thioester intermediate is cysteine 4764. The tract at residues 4806-4836 (EPAADDSSEDSDNEDADSFASDSTQDYLTGH) is disordered. Over residues 4808–4822 (AADDSSEDSDNEDAD) the composition is skewed to acidic residues. Phosphoserine occurs at positions 4812, 4813, and 4816. The residue at position 4829 (threonine 4829) is a Phosphothreonine.

As to quaternary structure, interacts (when phosphorylated at Thr-4829 and sumoylated) with RNF8 (via FHA domain); this interaction increases after ionising radiation (IR) treatment. Interacts with XPA. Interacts with NEURL4. Via its interaction with NEURL4, may indirectly interact with CCP110 and CEP97. Phosphorylation at Thr-4829 is required for interaction with RNF8. Post-translationally, sumoylated with SUMO1 by PIAS4 in response to double-strand breaks (DSBs), promoting the interaction with RNF8. In terms of tissue distribution, highest levels are found in brain and testis with lower levels in heart, lung, liver, skeletal muscle and kidney. Little expression detected in spleen.

The protein resides in the cytoplasm. The protein localises to the cytoskeleton. It is found in the microtubule organizing center. Its subcellular location is the centrosome. It localises to the centriole. The protein resides in the nucleus. The enzyme catalyses S-ubiquitinyl-[E2 ubiquitin-conjugating enzyme]-L-cysteine + [acceptor protein]-L-lysine = [E2 ubiquitin-conjugating enzyme]-L-cysteine + N(6)-ubiquitinyl-[acceptor protein]-L-lysine.. It participates in protein modification; protein ubiquitination. E3 ubiquitin-protein ligase that regulates ubiquitin-dependent retention of repair proteins on damaged chromosomes. Recruited to sites of DNA damage in response to ionizing radiation (IR) and facilitates the assembly of UBE2N and RNF8 promoting DNA damage-induced formation of 'Lys-63'-linked ubiquitin chains. Acts as a mediator of binding specificity between UBE2N and RNF8. Involved in the maintenance of RNF168 levels. E3 ubiquitin-protein ligase that promotes the ubiquitination and proteasomal degradation of XPA which influences the circadian oscillation of DNA excision repair activity. By controlling the steady-state expression of the IGF1R receptor, indirectly regulates the insulin-like growth factor receptor signaling pathway. Also modulates iron metabolism by regulating the basal turnover of FBXL5. The protein is E3 ubiquitin-protein ligase HERC2 of Mus musculus (Mouse).